The chain runs to 308 residues: Homoserine kinase (308 aa).

85–95 (PLTRGLGSSAA) is an ATP binding site.

Belongs to the GHMP kinase family. Homoserine kinase subfamily.

The protein localises to the cytoplasm. It carries out the reaction L-homoserine + ATP = O-phospho-L-homoserine + ADP + H(+). The protein operates within amino-acid biosynthesis; L-threonine biosynthesis; L-threonine from L-aspartate: step 4/5. Catalyzes the ATP-dependent phosphorylation of L-homoserine to L-homoserine phosphate. This chain is Homoserine kinase, found in Caldicellulosiruptor saccharolyticus (strain ATCC 43494 / DSM 8903 / Tp8T 6331).